Here is a 342-residue protein sequence, read N- to C-terminus: tRNA-specific 2-thiouridylase MnmA (342 aa).

Residues 6-13 (LLSGGVDS) and leucine 32 contribute to the ATP site. The active-site Nucleophile is the cysteine 92. A disulfide bond links cysteine 92 and cysteine 191. Glycine 116 lines the ATP pocket. The segment at 138–140 (KDQ) is interaction with tRNA. The active-site Cysteine persulfide intermediate is cysteine 191. An interaction with tRNA region spans residues 293-294 (RY).

It belongs to the MnmA/TRMU family.

Its subcellular location is the cytoplasm. The catalysed reaction is S-sulfanyl-L-cysteinyl-[protein] + uridine(34) in tRNA + AH2 + ATP = 2-thiouridine(34) in tRNA + L-cysteinyl-[protein] + A + AMP + diphosphate + H(+). Functionally, catalyzes the 2-thiolation of uridine at the wobble position (U34) of tRNA, leading to the formation of s(2)U34. This Helicobacter pylori (strain HPAG1) protein is tRNA-specific 2-thiouridylase MnmA.